The following is a 186-amino-acid chain: Probable GTP-binding protein EngB (186 aa).

Residues D18–K186 form the EngB-type G domain. Residues G26–S33, G52–L56, D70–G73, T137–D140, and V166–S168 each bind GTP. S33 and T54 together coordinate Mg(2+).

It belongs to the TRAFAC class TrmE-Era-EngA-EngB-Septin-like GTPase superfamily. EngB GTPase family. Mg(2+) serves as cofactor.

Necessary for normal cell division and for the maintenance of normal septation. The sequence is that of Probable GTP-binding protein EngB from Mycoplasmopsis pulmonis (strain UAB CTIP) (Mycoplasma pulmonis).